Here is an 824-residue protein sequence, read N- to C-terminus: Dapper 1 (824 aa).

Disordered stretches follow at residues 1–34 (MKPI…QRTR), 61–80 (ALTP…GDTP), 131–150 (EEHL…LSDG), 454–487 (TSNV…ESTQ), and 516–536 (ASSS…SSSQ). An interaction with tcf7l1 region spans residues 2–343 (KPIPATPDHL…PVRTNKPRTS (342 aa)). The span at 11-34 (LGQHQESPRRKDKGEAESERQRTR) shows a compositional bias: basic and acidic residues. Residues 19-47 (RRKDKGEAESERQRTRERLEATLAGLAEL) adopt a coiled-coil conformation. A compositionally biased stretch (basic and acidic residues) spans 520–530 (FDERPPLDFKS). The PDZ-binding motif lies at 821-824 (MTTV).

It belongs to the dapper family. Interacts with dbf4, dvl2 and tcf7l1.

It localises to the cytoplasm. The protein localises to the nucleus. Involved in regulation of intracellular signaling pathways during development. Specifically thought to play a role in canonical and/or non-canonical Wnt signaling pathways through interaction with DSH (Dishevelled) family proteins. Binds to dvl2 and regulates the degradation of ctnnb1/beta-catenin, thereby modulating the transcriptional activation of target genes of the Wnt signaling pathway. May also bind to and directly stimulate the activity of tcf7l1. The polypeptide is Dapper 1 (dact1) (Xenopus tropicalis (Western clawed frog)).